Here is a 554-residue protein sequence, read N- to C-terminus: MKLLKDSGAALLALFFVLVYLLPVNSRLLWQPDETRYAEISREMLQRGDWVVPYFMDIRYFEKPVAGYWFNNISQWIFGDSNFAVRFGSIFSTALSAVLVYWLATLLWRNRSTSVLATLIYLSFLLVFGIGTYAVLDPMISLWLTAAMVSFYLTLKAENWQQKVGAYALLGVACGMGFMTKGFLALAVPVIAVLPIVIQQKRIKDLVVFGPIAIVCAVLLSLPWALAIAQREPDFWNYFFWVEHIQRFAEASAQHKSPIWYYLPILCIGVLPWLGLLPGALFKGWRERATKPELFFLLSWVVMPLLFFSVAKGKLPTYILPCMAPLSLLMAAYATDCANNIRMRALKINGVINLLFGVACALVIVVIGLGLVKDIVAYGPQENQKVWLGVLAFAGWGVTGFITLRNNARNWRWAAACPLLFILLVGYLIPQQVVDSKQPQNFIKNNFSELSSSRYVLTDSVGVAAGLAWELKRSDILMFSEKGELTYGLAYPDSQDNYISNDDFPTWLAQARKEGDVSLVVQLAKNEALPAHLPPADKVNLMNRLALLWYQKTP.

The next 11 helical transmembrane spans lie at 4–24, 87–107, 115–135, 178–198, 206–226, 262–282, 293–313, 315–335, 351–371, 384–404, and 414–434; these read LKDS…LLPV, FGSI…ATLL, VLAT…TYAV, FMTK…PIVI, LVVF…PWAL, YLPI…GALF, ELFF…VAKG, LPTY…AYAT, VINL…GLGL, QKVW…FITL, and AAAC…QQVV.

The protein belongs to the glycosyltransferase 83 family.

Its subcellular location is the cell inner membrane. The enzyme catalyses 4-amino-4-deoxy-alpha-L-arabinopyranosyl di-trans,octa-cis-undecaprenyl phosphate + lipid IVA = lipid IIA + di-trans,octa-cis-undecaprenyl phosphate.. Its pathway is lipopolysaccharide metabolism; 4-amino-4-deoxy-beta-L-arabinose-lipid A biosynthesis. Its function is as follows. Catalyzes the transfer of the L-Ara4N moiety of the glycolipid undecaprenyl phosphate-alpha-L-Ara4N to lipid A. The modified arabinose is attached to lipid A and is required for resistance to polymyxin and cationic antimicrobial peptides. This is Undecaprenyl phosphate-alpha-4-amino-4-deoxy-L-arabinose arabinosyl transferase from Yersinia pseudotuberculosis serotype O:1b (strain IP 31758).